A 98-amino-acid chain; its full sequence is Co-chaperonin GroES 4 (98 aa).

It belongs to the GroES chaperonin family. As to quaternary structure, heptamer of 7 subunits arranged in a ring. Interacts with the chaperonin GroEL.

It is found in the cytoplasm. Together with the chaperonin GroEL, plays an essential role in assisting protein folding. The GroEL-GroES system forms a nano-cage that allows encapsulation of the non-native substrate proteins and provides a physical environment optimized to promote and accelerate protein folding. GroES binds to the apical surface of the GroEL ring, thereby capping the opening of the GroEL channel. The polypeptide is Co-chaperonin GroES 4 (Mesorhizobium japonicum (strain LMG 29417 / CECT 9101 / MAFF 303099) (Mesorhizobium loti (strain MAFF 303099))).